A 391-amino-acid polypeptide reads, in one-letter code: Histamine H4 receptor (391 aa).

Topologically, residues 1 to 19 (MSESNSTGILPPAAQVPLA) are extracellular. Asn-5 carries N-linked (GlcNAc...) asparagine glycosylation. Residues 20–40 (FLMSSFAFAIMVGNAVVILAF) traverse the membrane as a helical segment. The Cytoplasmic portion of the chain corresponds to 41–52 (VVDRNLRHRSNY). The helical transmembrane segment at 53-73 (FFLNLAISDFLVGLISIPLYI) threads the bilayer. Over 74 to 87 (PHVLFNWNFGSGIC) the chain is Extracellular. A disulfide bridge connects residues Cys-87 and Cys-166. A helical membrane pass occupies residues 88-108 (MFWLITDYLLCTASVYNIVLI). Topologically, residues 109–131 (SYDRYQSVSNAVSYRAQHTGIMK) are cytoplasmic. The chain crosses the membrane as a helical span at residues 132–152 (IVAQMVAVWILAFLVNGPMIL). The Extracellular segment spans residues 153 to 174 (ASDSWKNSTNTKDCEPGFVTEW). N-linked (GlcNAc...) asparagine glycosylation is present at Asn-159. A helical membrane pass occupies residues 175–195 (YILTITMLLEFLLPVISVAYF). The Cytoplasmic segment spans residues 196–306 (NVQIYWSLWK…LLRGRKLARS (111 aa)). Residues 238-258 (TSNPGLKESAASRHSESPRRK) form a disordered region. Positions 247 to 256 (AASRHSESPR) are enriched in basic and acidic residues. A helical transmembrane segment spans residues 307-327 (LAILLSAFAICWAPYCLFTIV). The Extracellular segment spans residues 328–343 (LSTYPRTERPKSVWYS). The helical transmembrane segment at 344–364 (IAFWLQWFNSFVNPFLYPLCH) threads the bilayer. Over 365–391 (RRFQKAFWKILCVTKQPALSQNQSVSS) the chain is Cytoplasmic.

It belongs to the G-protein coupled receptor 1 family. As to quaternary structure, interacts with TSPAN4.

Its subcellular location is the cell membrane. Its function is as follows. The H4 subclass of histamine receptors could mediate the histamine signals in peripheral tissues. Displays a significant level of constitutive activity (spontaneous activity in the absence of agonist). The protein is Histamine H4 receptor (Hrh4) of Mus musculus (Mouse).